The primary structure comprises 65 residues: Large ribosomal subunit protein bL35 (65 aa).

The protein belongs to the bacterial ribosomal protein bL35 family.

This chain is Large ribosomal subunit protein bL35, found in Nitrosomonas eutropha (strain DSM 101675 / C91 / Nm57).